Consider the following 415-residue polypeptide: Multifunctional CCA protein (415 aa).

2 residues coordinate ATP: G8 and R11. G8 and R11 together coordinate CTP. Mg(2+)-binding residues include D21 and D23. 3 residues coordinate ATP: R91, R137, and R140. CTP contacts are provided by R91, R137, and R140. Residues 228–329 form the HD domain; it reads TGIHTLMTLA…VGLFDSIDAW (102 aa).

This sequence belongs to the tRNA nucleotidyltransferase/poly(A) polymerase family. Bacterial CCA-adding enzyme type 1 subfamily. Monomer. Can also form homodimers and oligomers. The cofactor is Mg(2+). Ni(2+) serves as cofactor.

The catalysed reaction is a tRNA precursor + 2 CTP + ATP = a tRNA with a 3' CCA end + 3 diphosphate. It catalyses the reaction a tRNA with a 3' CCA end + 2 CTP + ATP = a tRNA with a 3' CCACCA end + 3 diphosphate. In terms of biological role, catalyzes the addition and repair of the essential 3'-terminal CCA sequence in tRNAs without using a nucleic acid template. Adds these three nucleotides in the order of C, C, and A to the tRNA nucleotide-73, using CTP and ATP as substrates and producing inorganic pyrophosphate. tRNA 3'-terminal CCA addition is required both for tRNA processing and repair. Also involved in tRNA surveillance by mediating tandem CCA addition to generate a CCACCA at the 3' terminus of unstable tRNAs. While stable tRNAs receive only 3'-terminal CCA, unstable tRNAs are marked with CCACCA and rapidly degraded. The chain is Multifunctional CCA protein from Cronobacter sakazakii (strain ATCC BAA-894) (Enterobacter sakazakii).